The primary structure comprises 500 residues: DNA double-strand break repair helicase HerA (500 aa).

ATP is bound by residues R142, 151-156 (GSGKSN), and 459-460 (KI).

This sequence belongs to the HerA family. In terms of assembly, homohexamer. Forms a complex with NurA.

The enzyme catalyses Couples ATP hydrolysis with the unwinding of duplex DNA at the replication fork by translocating in the 5'-3' direction. This creates two antiparallel DNA single strands (ssDNA). The leading ssDNA polymer is the template for DNA polymerase III holoenzyme which synthesizes a continuous strand.. It carries out the reaction ATP + H2O = ADP + phosphate + H(+). It catalyses the reaction Couples ATP hydrolysis with the unwinding of duplex DNA by translocating in the 3'-5' direction.. Its activity is regulated as follows. ATPase activity is stimulated in the presence of linear double-stranded (ds)DNA. Helicase activity requires the presence of NurA. LhrC-Core (Hel112) inhibits the exonuclease activity of the HerA-NurA complex on ss- and dsDNA, has no effect on the nicking activity of NurA. In terms of biological role, involved in DNA double-strand break (DSB) repair. Probably acts with NurA to stimulate resection of the 5' strand and produce the long 3' single-strand that is required for RadA loading. NurA and HerA together stimulate the end-resection of six nucleotides of a linear DNA substrate. Has DNA-dependent ATPase activity and bidirectional DNA helicase activity. Preferentially binds single stranded (ss)DNA, bubble and semiforked DNA substrate over other DNA molecules tested. Stimulates the exo- but not endonuclease activity of NurA. In Saccharolobus solfataricus (strain ATCC 35092 / DSM 1617 / JCM 11322 / P2) (Sulfolobus solfataricus), this protein is DNA double-strand break repair helicase HerA.